Here is a 102-residue protein sequence, read N- to C-terminus: uncharacterized protein (102 aa).

This is an uncharacterized protein from Enterobacteria phage T4 (Bacteriophage T4).